The primary structure comprises 365 residues: A-type ATP synthase subunit C (365 aa).

It belongs to the V-ATPase V0D/AC39 subunit family. As to quaternary structure, has multiple subunits with at least A(3), B(3), C, D, E, F, H, I and proteolipid K(x).

It localises to the cell membrane. Functionally, component of the A-type ATP synthase that produces ATP from ADP in the presence of a proton gradient across the membrane. The sequence is that of A-type ATP synthase subunit C from Thermococcus kodakarensis (strain ATCC BAA-918 / JCM 12380 / KOD1) (Pyrococcus kodakaraensis (strain KOD1)).